The chain runs to 317 residues: Putative 2-hydroxyacid dehydrogenase SAB2178 (317 aa).

NAD(+)-binding positions include Glu155 to Ile156, Ala234 to Arg236, and Asp260. The active site involves Arg236. Residue Glu265 is part of the active site. His283 functions as the Proton donor in the catalytic mechanism. His283–Asn286 contributes to the NAD(+) binding site.

This sequence belongs to the D-isomer specific 2-hydroxyacid dehydrogenase family.

The polypeptide is Putative 2-hydroxyacid dehydrogenase SAB2178 (Staphylococcus aureus (strain bovine RF122 / ET3-1)).